The primary structure comprises 332 residues: DNA-directed RNA polymerase subunit alpha (332 aa).

Residues 1 to 244 (MKKHAKVYYS…AHLNLLADVE (244 aa)) form an alpha N-terminal domain (alpha-NTD) region. Residues 259–332 (IKEEPIRRFS…NYKNENKGEN (74 aa)) are alpha C-terminal domain (alpha-CTD).

It belongs to the RNA polymerase alpha chain family. In terms of assembly, homodimer. The RNAP catalytic core consists of 2 alpha, 1 beta, 1 beta' and 1 omega subunit. When a sigma factor is associated with the core the holoenzyme is formed, which can initiate transcription.

The catalysed reaction is RNA(n) + a ribonucleoside 5'-triphosphate = RNA(n+1) + diphosphate. In terms of biological role, DNA-dependent RNA polymerase catalyzes the transcription of DNA into RNA using the four ribonucleoside triphosphates as substrates. This chain is DNA-directed RNA polymerase subunit alpha, found in Mesomycoplasma hyopneumoniae (strain 232) (Mycoplasma hyopneumoniae).